Here is a 60-residue protein sequence, read N- to C-terminus: Small integral membrane protein 3 (60 aa).

A helical transmembrane segment spans residues 20-40 (IWAIVLIILATVVIMTSLFLC).

Its subcellular location is the membrane. In Rattus norvegicus (Rat), this protein is Small integral membrane protein 3 (Smim3).